The primary structure comprises 391 residues: Methyltransferase/ribosomally synthesized type I borosin cyclic peptide precursor cmaMA (391 aa).

The methyltransferase domain stretch occupies residues 1–253; sequence MDATANPKAG…TISTFYLPPK (253 aa). Residues arginine 72, tyrosine 76, and tyrosine 98 contribute to the active site. 8 residues coordinate S-adenosyl-L-methionine: tyrosine 98, histidine 100, valine 103, alanine 130, glutamine 172, alanine 215, serine 246, and threonine 247. The interval 254 to 373 is clasp domain; that stretch reads APSAKVSLNR…AQLSGALKEG (120 aa). Positions 374–376 are precursor leader; that stretch reads GVP. The residue at position 382 (leucine 382) is an N-methylleucine. 2 positions are modified to N-methylphenylalanine: phenylalanine 385 and phenylalanine 386. Residues isoleucine 387 and isoleucine 388 each carry the N-methylisoleucine modification.

In the N-terminal section; belongs to the precorrin methyltransferase family. As to quaternary structure, homodimer. In terms of processing, cmaMA automethylates at Leu-382, Phe-385, Phe-386, Ile-387 and Ile-388 before being processed by the prolyloligopeptidase ledP which likely forms a peptidyl ester upon removal of the follower propeptide, which then undergoes macrocyclization with the N-terminus of the modified core peptide. Peptide backbone alpha-N-methylations change the physicochemical properties of amide bonds to provide structural constraints and other favorable characteristics including biological membrane permeability to peptides.

The protein operates within secondary metabolite biosynthesis. Functionally, fusion protein of the methyltransferase cmaM and a type I borosin core peptide; part of the gene cluster that mediates the biosynthesis of a type I borosin, a highly methylated cyclic peptide with potent biological activities. Type I borosins derive from the C-terminus of the fusion protein, and it is the same protein that methylates its own C-terminus using S-adenosyl methionine (SAM). The C-terminus is subsequently cleaved off and macrocyclized by a prolyloligopeptidase to give the final product. The polypeptide is Methyltransferase/ribosomally synthesized type I borosin cyclic peptide precursor cmaMA (Coprinopsis marcescibilis (Agaric fungus)).